Here is a 129-residue protein sequence, read N- to C-terminus: Protein GLUTAMINE DUMPER 2 (129 aa).

Over 1 to 34 (MQTMEGRQYNYQDSINASSSMVVPHSPWHSPVPY) the chain is Extracellular. The helical transmembrane segment at 35–55 (LFGGLAAMLALICVALLILAC) threads the bilayer. Topologically, residues 56 to 129 (SYWRLSGSAE…DHNEEEGRRG (74 aa)) are cytoplasmic. The segment at 66–89 (RDLEAGDDAKPDNDTNKTKHTEMP) is disordered. The short motif at 94-98 (VIMAG) is the VIMAG element. Residues 106–129 (ATPATRSEQSCTCGDHNEEEGRRG) are disordered. Over residues 120-129 (DHNEEEGRRG) the composition is skewed to basic and acidic residues.

The protein belongs to the GLUTAMINE DUMPER 1 (TC 9.B.60) family. As to expression, expressed in the vascular tissues.

It is found in the membrane. Its function is as follows. Probable subunit of an amino acid transporter involved in the regulation of the amino acid metabolism. Stimulates amino acid export by activating nonselective amino acid facilitators. This is Protein GLUTAMINE DUMPER 2 (GDU2) from Arabidopsis thaliana (Mouse-ear cress).